The chain runs to 851 residues: Venom phosphodiesterase (851 aa).

The N-terminal stretch at 1 to 23 (MIQQKVLFISLVAVALGLGLGLG) is a signal peptide. SMB domains are found at residues 30–73 (PQVS…VLPT) and 74–118 (QSWS…GETS). Intrachain disulfides connect Cys-34-Cys-38, Cys-34-Cys-51, Cys-38-Cys-69, Cys-49-Cys-51, Cys-49-Cys-62, Cys-55-Cys-61, Cys-62-Cys-69, Cys-78-Cys-83, Cys-78-Cys-95, Cys-83-Cys-113, Cys-93-Cys-95, Cys-93-Cys-106, Cys-99-Cys-105, Cys-106-Cys-113, Cys-124-Cys-170, and Cys-132-Cys-344. A glycan (N-linked (GlcNAc...) asparagine) is linked at Asn-39. A Cell attachment site motif is present at residues 58-60 (RQA). A divalent metal cation contacts are provided by Asp-147 and Thr-185. Residue Thr-185 is the AMP-threonine intermediate of the active site. Asn-216, Asn-259, and Asn-270 each carry an N-linked (GlcNAc...) asparagine glycan. Residue Lys-271 coordinates AMP. Asp-305, His-309, Asp-352, and His-353 together coordinate a divalent metal cation. His-309 serves as a coordination point for AMP. 6 cysteine pairs are disulfide-bonded: Cys-360-Cys-457, Cys-408-Cys-793, Cys-541-Cys-599, Cys-554-Cys-654, Cys-556-Cys-639, and Cys-762-Cys-772. Asn-405 carries N-linked (GlcNAc...) asparagine glycosylation. His-462 is a binding site for a divalent metal cation. Asn-512, Asn-594, and Asn-745 each carry an N-linked (GlcNAc...) asparagine glycan.

This sequence belongs to the nucleotide pyrophosphatase/phosphodiesterase family. In terms of assembly, monomer cleaved in two subunits; disulfide-linked. Is synthesized as a single-chain protein and is subsequently cleaved to form a two-subunit protein held together with disulfide bonds. The cofactor is a divalent metal cation. Expressed by venom gland.

The protein localises to the secreted. The catalysed reaction is ADP + H2O = AMP + phosphate + H(+). Functionally, hydrolyzes ADP with high activity. Shows weak or no activity on 5'-AMP, 5'-GMP, 3'-AMP, ATP, cAMP, and cGMP. Is devoid of monophosphatase and proteinase activities. Dose-dependently inhibits platelet aggregation induced by ADP (IC(50)=0.99 uM) and collagen (IC(50)=1.4 uM). This chain is Venom phosphodiesterase, found in Macrovipera lebetinus (Levantine viper).